The sequence spans 325 residues: Deoxyhypusine hydroxylase (325 aa).

S2 is modified (N-acetylserine). 2 HEAT-like PBS-type repeats span residues 77–103 and 110–136; these read LKHEVAYVLGQTKNLDAAPTLRHVMLD and VRHEAAEALGALGDKDSLDDLNKAAKE. Residues H79, E80, H112, and E113 each coordinate Fe cation. S126 bears the Phosphoserine mark. T187 bears the Phosphothreonine mark. 3 HEAT-like PBS-type repeats span residues 202–231, 235–261, and 268–294; these read LFQRYRAMFRLRDIGTDEAILALATGFSAE, FKHEIAYVFGQIGSPAAVPSLIEVLGR, and VRHEAAEALGAIASPEVVDVLKSYLND. The Fe cation site is built by H237, E238, H270, and E271. S281 bears the Phosphoserine mark.

The protein belongs to the deoxyhypusine hydroxylase family. Requires Fe(2+) as cofactor.

It is found in the cytoplasm. The protein localises to the nucleus. The enzyme catalyses [eIF5A protein]-deoxyhypusine + AH2 + O2 = [eIF5A protein]-hypusine + A + H2O. Its pathway is protein modification; eIF5A hypusination. Catalyzes the hydroxylation of the N(6)-(4-aminobutyl)-L-lysine intermediate to form hypusine, an essential post-translational modification only found in mature eIF-5A factor. This chain is Deoxyhypusine hydroxylase, found in Saccharomyces cerevisiae (strain ATCC 204508 / S288c) (Baker's yeast).